The primary structure comprises 489 residues: Protein LMBR1L (489 aa).

The Extracellular portion of the chain corresponds to 1–21 (MEAPDCEVLSVREQLFHERIR). The segment at 1 to 59 (MEAPDCEVLSVREQLFHERIRECIISTLLFATLYILCHIFLTRFKKPAEFTTVDDADAT) is interaction with LGB. Residues 1 to 76 (MEAPDCEVLS…LCTFTLAIAL (76 aa)) are LCN1-binding. Residues 22 to 42 (ECIISTLLFATLYILCHIFLT) form a helical membrane-spanning segment. Residues 43-66 (RFKKPAEFTTVDDADATVNKIALE) are Cytoplasmic-facing. A helical transmembrane segment spans residues 67–87 (LCTFTLAIALGAVLLLPFSII). At 88 to 114 (SNEVLLSLPRNYYIQWLNGSLIHGLWN) the chain is on the extracellular side. A helical membrane pass occupies residues 115–135 (LVFLFSNLSLIFLMPFAYFFT). Topologically, residues 136–154 (ESEGFAGSRKGVLGRVYET) are cytoplasmic. The helical transmembrane segment at 155–175 (VVMLMLLTLLVLGMVWVASAI) threads the bilayer. Over 176–196 (VDNNKASRESLYDFWEYYLPY) the chain is Extracellular. A helical transmembrane segment spans residues 197–217 (LYSCISFLGVLLLLVCTPLGL). The Cytoplasmic portion of the chain corresponds to 218–305 (ARMFSVTGKL…NLGYPLAMLC (88 aa)). Residues 306-326 (LLVLTGLSVLIVAIHILELLI) form a helical membrane-spanning segment. Over 327–350 (DEAAMPRGMQGASLGQVSFSKLGS) the chain is Extracellular. A helical membrane pass occupies residues 351 to 371 (FGAVVQVVLIFYLMVSSVVGF). Residues 372-388 (YSSPLFRSLRPRWHDTA) are Cytoplasmic-facing. Residues 389–409 (MTQIIGNCVCLLVLSSALPVF) traverse the membrane as a helical segment. The Extracellular portion of the chain corresponds to 410-431 (SRTLGLTRFDLLGDFGRFNWLG). A helical membrane pass occupies residues 432–452 (NFYIVFLYNAAFAGLTTLCLV). Residues 453–489 (KTFTAAVRAELIRAFGLDRLPLPVSGFPRASRKTQHQ) are Cytoplasmic-facing.

Belongs to the LIMR family. Dimer. Can also form higher oligomers. Interacts with LCN1; this interaction mediates the endocytosis of LCN1. Interacts with UBAC2, FAF2, VCP, AMFR, ZNRF3, CTNNB1, LRP6, GSK3A, GSK3B, FZD6, DVL2 and RNF43. Interaction with LGB and SCGB1A1 is controversial.

The protein resides in the cell membrane. It localises to the endoplasmic reticulum membrane. Plays an essential role in lymphocyte development by negatively regulating the canonical Wnt signaling pathway. In association with UBAC2 and E3 ubiquitin-protein ligase AMFR, promotes the ubiquitin-mediated degradation of CTNNB1 and Wnt receptors FZD6 and LRP6. LMBR1L stabilizes the beta-catenin destruction complex that is required for regulating CTNNB1 levels. Acts as a LCN1 receptor and can mediate its endocytosis. This Macaca fascicularis (Crab-eating macaque) protein is Protein LMBR1L (LMBR1L).